The following is a 309-amino-acid chain: 4-diphosphocytidyl-2-C-methyl-D-erythritol kinase (309 aa).

Lys-28 is a catalytic residue. Position 120 to 130 (120 to 130) interacts with ATP; that stretch reads PSQAGMGGGSS. The active site involves Asp-162.

This sequence belongs to the GHMP kinase family. IspE subfamily.

The catalysed reaction is 4-CDP-2-C-methyl-D-erythritol + ATP = 4-CDP-2-C-methyl-D-erythritol 2-phosphate + ADP + H(+). It participates in isoprenoid biosynthesis; isopentenyl diphosphate biosynthesis via DXP pathway; isopentenyl diphosphate from 1-deoxy-D-xylulose 5-phosphate: step 3/6. Functionally, catalyzes the phosphorylation of the position 2 hydroxy group of 4-diphosphocytidyl-2C-methyl-D-erythritol. In Polaromonas sp. (strain JS666 / ATCC BAA-500), this protein is 4-diphosphocytidyl-2-C-methyl-D-erythritol kinase.